The sequence spans 262 residues: Adenosylcobinamide-GDP ribazoletransferase (262 aa).

The next 7 membrane-spanning stretches (helical) occupy residues 37-57, 58-78, 112-132, 139-159, 183-203, 205-225, and 237-257; these read SMPL…ALCS, MFSF…GIWL, VGAF…LFLY, IPPA…AWLL, AVWA…FGGV, VWTS…AKPW, and VLGA…WLLH.

It belongs to the CobS family. Requires Mg(2+) as cofactor.

It localises to the cell membrane. It catalyses the reaction alpha-ribazole + adenosylcob(III)inamide-GDP = adenosylcob(III)alamin + GMP + H(+). The enzyme catalyses alpha-ribazole 5'-phosphate + adenosylcob(III)inamide-GDP = adenosylcob(III)alamin 5'-phosphate + GMP + H(+). It participates in cofactor biosynthesis; adenosylcobalamin biosynthesis; adenosylcobalamin from cob(II)yrinate a,c-diamide: step 7/7. Its function is as follows. Joins adenosylcobinamide-GDP and alpha-ribazole to generate adenosylcobalamin (Ado-cobalamin). Also synthesizes adenosylcobalamin 5'-phosphate from adenosylcobinamide-GDP and alpha-ribazole 5'-phosphate. The chain is Adenosylcobinamide-GDP ribazoletransferase from Geobacillus thermodenitrificans (strain NG80-2).